Here is a 366-residue protein sequence, read N- to C-terminus: S-adenosylmethionine:tRNA ribosyltransferase-isomerase (366 aa).

Belongs to the QueA family. Monomer.

The protein localises to the cytoplasm. The catalysed reaction is 7-aminomethyl-7-carbaguanosine(34) in tRNA + S-adenosyl-L-methionine = epoxyqueuosine(34) in tRNA + adenine + L-methionine + 2 H(+). It functions in the pathway tRNA modification; tRNA-queuosine biosynthesis. Transfers and isomerizes the ribose moiety from AdoMet to the 7-aminomethyl group of 7-deazaguanine (preQ1-tRNA) to give epoxyqueuosine (oQ-tRNA). The polypeptide is S-adenosylmethionine:tRNA ribosyltransferase-isomerase (Synechococcus sp. (strain CC9605)).